The sequence spans 328 residues: Malate dehydrogenase (328 aa).

NAD(+) is bound at residue 12 to 18 (GAAGQIA). Substrate contacts are provided by arginine 93 and arginine 99. NAD(+) is bound by residues asparagine 106, glutamine 113, and 130–132 (VGN). Positions 132 and 163 each coordinate substrate. Residue histidine 188 is the Proton acceptor of the active site.

Belongs to the LDH/MDH superfamily. MDH type 2 family.

The catalysed reaction is (S)-malate + NAD(+) = oxaloacetate + NADH + H(+). In terms of biological role, catalyzes the reversible oxidation of malate to oxaloacetate. The protein is Malate dehydrogenase of Burkholderia ambifaria (strain ATCC BAA-244 / DSM 16087 / CCUG 44356 / LMG 19182 / AMMD) (Burkholderia cepacia (strain AMMD)).